Reading from the N-terminus, the 202-residue chain is FMN-dependent NADH:quinone oxidoreductase (202 aa).

FMN contacts are provided by residues serine 9, 15-17, and 94-97; these read SAS and MYNL.

This sequence belongs to the azoreductase type 1 family. Homodimer. Requires FMN as cofactor.

It carries out the reaction 2 a quinone + NADH + H(+) = 2 a 1,4-benzosemiquinone + NAD(+). The catalysed reaction is N,N-dimethyl-1,4-phenylenediamine + anthranilate + 2 NAD(+) = 2-(4-dimethylaminophenyl)diazenylbenzoate + 2 NADH + 2 H(+). In terms of biological role, quinone reductase that provides resistance to thiol-specific stress caused by electrophilic quinones. Also exhibits azoreductase activity. Catalyzes the reductive cleavage of the azo bond in aromatic azo compounds to the corresponding amines. The polypeptide is FMN-dependent NADH:quinone oxidoreductase (Gluconobacter oxydans (strain 621H) (Gluconobacter suboxydans)).